Reading from the N-terminus, the 399-residue chain is O-glucosyltransferase rumi homolog (399 aa).

A signal peptide spans 1–18; that stretch reads MHFIIGIVICLSLSVIQS. Residues asparagine 19 and asparagine 67 are each glycosylated (N-linked (GlcNAc...) asparagine). 4 cysteine pairs are disulfide-bonded: cysteine 66–cysteine 73, cysteine 71–cysteine 373, cysteine 118–cysteine 124, and cysteine 277–cysteine 300. Aspartate 149 serves as the catalytic Proton donor/acceptor. The interaction with the consensus sequence C-X-S-X-[PA]-C in peptide substrates stretch occupies residues 189 to 194; the sequence is AIALYP. UDP-alpha-D-glucose is bound by residues 224–228, arginine 232, 271–273, and 289–293; these read RGSRT, VTL, and AASFR.

Belongs to the glycosyltransferase 90 family.

Its subcellular location is the endoplasmic reticulum lumen. It is found in the secreted. It functions in the pathway protein modification; protein glycosylation. Its function is as follows. Protein O-glucosyltransferase. Catalyzes the reaction that attaches glucose through an O-glycosidic linkage to a conserved serine residue found in the consensus sequence C-X-S-X-[PA]-C in epidermal growth factor-like repeats. Regulates Notch signaling by glucosylating Notch in the ER, glucosylation is required for the correct folding and cleavage of Notch. The polypeptide is O-glucosyltransferase rumi homolog (Anopheles gambiae (African malaria mosquito)).